The following is a 493-amino-acid chain: L-arabinose isomerase 1 (493 aa).

Residues glutamate 301, glutamate 326, histidine 343, and histidine 442 each contribute to the Mn(2+) site.

This sequence belongs to the arabinose isomerase family. Mn(2+) is required as a cofactor.

The enzyme catalyses beta-L-arabinopyranose = L-ribulose. It functions in the pathway carbohydrate degradation; L-arabinose degradation via L-ribulose; D-xylulose 5-phosphate from L-arabinose (bacterial route): step 1/3. Catalyzes the conversion of L-arabinose to L-ribulose. This is L-arabinose isomerase 1 from Bacillus licheniformis (strain ATCC 14580 / DSM 13 / JCM 2505 / CCUG 7422 / NBRC 12200 / NCIMB 9375 / NCTC 10341 / NRRL NRS-1264 / Gibson 46).